Here is a 254-residue protein sequence, read N- to C-terminus: Geranylgeranylglyceryl phosphate synthase (254 aa).

Positions 27 and 56 each coordinate Mg(2+). Residues 174 to 180, 212 to 213, and 234 to 235 each bind sn-glycerol 1-phosphate; these read YLEAGSG, GG, and GT.

The protein belongs to the GGGP/HepGP synthase family. Group II subfamily. Homohexamer. Mg(2+) serves as cofactor.

Its subcellular location is the cytoplasm. It carries out the reaction sn-glycerol 1-phosphate + (2E,6E,10E)-geranylgeranyl diphosphate = sn-3-O-(geranylgeranyl)glycerol 1-phosphate + diphosphate. Its pathway is membrane lipid metabolism; glycerophospholipid metabolism. Its function is as follows. Prenyltransferase that catalyzes the transfer of the geranylgeranyl moiety of geranylgeranyl diphosphate (GGPP) to the C3 hydroxyl of sn-glycerol-1-phosphate (G1P). This reaction is the first ether-bond-formation step in the biosynthesis of archaeal membrane lipids. In Aeropyrum pernix (strain ATCC 700893 / DSM 11879 / JCM 9820 / NBRC 100138 / K1), this protein is Geranylgeranylglyceryl phosphate synthase.